A 411-amino-acid polypeptide reads, in one-letter code: Probable 26S proteasome regulatory subunit rpn-6.2 (411 aa).

Residues 212-381 (YKTSFSYFYE…DTVVIYPKAG (170 aa)) form the PCI domain.

The protein belongs to the proteasome subunit S9 family. As to quaternary structure, component of the lid subcomplex of the 19S proteasome regulatory particle complex (also named PA700 complex). The 26S proteasome consists of a 20S proteasome core and two 19S regulatory subunits.

In terms of biological role, component of the lid subcomplex of the 26S proteasome, a multiprotein complex involved in the ATP-dependent degradation of ubiquitinated proteins. In the complex, rpn-6.2 is required for proteasome assembly. The chain is Probable 26S proteasome regulatory subunit rpn-6.2 from Caenorhabditis briggsae.